Consider the following 485-residue polypeptide: UDP-N-acetylmuramoyl-L-alanyl-D-glutamate--2,6-diaminopimelate ligase (485 aa).

The UDP-N-acetyl-alpha-D-muramoyl-L-alanyl-D-glutamate site is built by Leu-27 and Ser-29. 106-112 serves as a coordination point for ATP; that stretch reads GTSGKTS. Residues 148-149, Ser-175, Gln-181, and Arg-183 each bind UDP-N-acetyl-alpha-D-muramoyl-L-alanyl-D-glutamate; that span reads TT. An N6-carboxylysine modification is found at Lys-215. Meso-2,6-diaminopimelate-binding positions include Arg-382, 406-409, Gly-454, and Glu-458; that span reads DNPR. Positions 406–409 match the Meso-diaminopimelate recognition motif motif; sequence DNPR.

The protein belongs to the MurCDEF family. MurE subfamily. Mg(2+) is required as a cofactor. Carboxylation is probably crucial for Mg(2+) binding and, consequently, for the gamma-phosphate positioning of ATP.

The protein resides in the cytoplasm. It catalyses the reaction UDP-N-acetyl-alpha-D-muramoyl-L-alanyl-D-glutamate + meso-2,6-diaminopimelate + ATP = UDP-N-acetyl-alpha-D-muramoyl-L-alanyl-gamma-D-glutamyl-meso-2,6-diaminopimelate + ADP + phosphate + H(+). The protein operates within cell wall biogenesis; peptidoglycan biosynthesis. In terms of biological role, catalyzes the addition of meso-diaminopimelic acid to the nucleotide precursor UDP-N-acetylmuramoyl-L-alanyl-D-glutamate (UMAG) in the biosynthesis of bacterial cell-wall peptidoglycan. This is UDP-N-acetylmuramoyl-L-alanyl-D-glutamate--2,6-diaminopimelate ligase from Bradyrhizobium diazoefficiens (strain JCM 10833 / BCRC 13528 / IAM 13628 / NBRC 14792 / USDA 110).